Consider the following 178-residue polypeptide: Large ribosomal subunit protein uL6 (178 aa).

Belongs to the universal ribosomal protein uL6 family. As to quaternary structure, part of the 50S ribosomal subunit.

Functionally, this protein binds to the 23S rRNA, and is important in its secondary structure. It is located near the subunit interface in the base of the L7/L12 stalk, and near the tRNA binding site of the peptidyltransferase center. The polypeptide is Large ribosomal subunit protein uL6 (Shouchella clausii (strain KSM-K16) (Alkalihalobacillus clausii)).